The following is a 638-amino-acid chain: Protein NSP-INTERACTING KINASE 1 (638 aa).

A signal peptide spans 1–31 (MESTIVMMMMITRSFFCFLGFLCLLCSSVHG). The Extracellular portion of the chain corresponds to 32-248 (LLSPKGVNFE…AGGSRNHKMA (217 aa)). N-linked (GlcNAc...) asparagine glycans are attached at residues N92 and N103. LRR repeat units follow at residues 104–128 (LTNL…IGRL), 130–152 (RLET…VGYL), 153–175 (QSLQ…SLSN), and 177–200 (TQLA…AAKT). 5 N-linked (GlcNAc...) asparagine glycosylation sites follow: N162, N175, N188, N219, and N231. The chain crosses the membrane as a helical span at residues 249–269 (IAVGSSVGTVSLIFIAVGLFL). Residues 270 to 638 (WWRQRHNQNT…VQAMELSGPR (369 aa)) are Cytoplasmic-facing. T309 bears the Phosphothreonine mark. One can recognise a Protein kinase domain in the interval 312-593 (FSSKNLLGKG…EGDGLAEKWE (282 aa)). Residue 318-326 (LGKGGYGNV) participates in ATP binding. Position 335 is a phosphothreonine (T335). Position 340 (K340) interacts with ATP. S393 and S396 each carry phosphoserine. The interval 422-502 (YLHEQCDPKI…DVFGFGILLL (81 aa)) is interaction with geminivirus NSP protein. The active-site Proton acceptor is D435. T468, T469, and T474 each carry phosphothreonine. Residue Y482 is modified to Phosphotyrosine. Phosphoserine is present on S484. Position 485 is a phosphothreonine (T485). The residue at position 489 (S489) is a Phosphoserine. Residue T566 is modified to Phosphothreonine.

Belongs to the protein kinase superfamily. Ser/Thr protein kinase family. As to quaternary structure, oligomer. Interacts with geminivirus nuclear shuttle protein (NSP). Interacts with RPL10A and RPL18B. Autophosphorylated. As to expression, expressed in seedlings, leaves, roots, stems and flowers.

It localises to the cell membrane. It catalyses the reaction L-seryl-[protein] + ATP = O-phospho-L-seryl-[protein] + ADP + H(+). The catalysed reaction is L-threonyl-[protein] + ATP = O-phospho-L-threonyl-[protein] + ADP + H(+). With respect to regulation, inhibited by the viral nuclear shuttle protein (NSP) that binds to the region required for oligomerization. Its function is as follows. Involved in defense response to geminivirus and begomovirus infection via regulation of the nuclear trafficking of RPL10A. Phosphorylates RPL10A in vitro. Activation of NIK1 down-regulates cytosolic translation. The polypeptide is Protein NSP-INTERACTING KINASE 1 (Arabidopsis thaliana (Mouse-ear cress)).